An 845-amino-acid polypeptide reads, in one-letter code: Prickle-like protein 2 (845 aa).

A PET domain is found at 18 to 126 (FDFQRSSTSD…NVRPFPVTMT (109 aa)). S92 is subject to Phosphoserine. LIM zinc-binding domains follow at residues 128–193 (AICE…CLKP), 193–253 (PRCA…LYAE), and 253–317 (EYCD…EDPN). 2 disordered regions span residues 314 to 346 (EDPN…NKGK) and 483 to 546 (YSDM…GSME). The segment covering 318–327 (GSDSSDSAFQ) has biased composition (polar residues). Phosphoserine occurs at positions 319, 321, and 322. Phosphothreonine is present on residues T535, T537, and T540. A phosphoserine mark is found at S544 and S547. Positions 558–581 (AEGGAKRQEHLSRFSMPDLSKDSG) are disordered. Phosphoserine is present on residues S608 and S643. The disordered stretch occupies residues 642–700 (QSFDFDGGIASSKLPGQEGVHIQPMSERTRRRTTSRDDNRRFRPHRSRRSRRSRSDNAL). Basic residues predominate over residues 683–693 (FRPHRSRRSRR). S732 bears the Phosphoserine mark. The interval 823-845 (STLGGRGQLHSRKRQKSKNCIIS) is disordered. At C842 the chain carries Cysteine methyl ester. The S-farnesyl cysteine moiety is linked to residue C842. Residues 843 to 845 (IIS) constitute a propeptide, removed in mature form.

The protein belongs to the prickle / espinas / testin family. As to expression, expressed in the hippocampus and cerebral cortex.

Its subcellular location is the nucleus membrane. The chain is Prickle-like protein 2 (Prickle2) from Mus musculus (Mouse).